The chain runs to 74 residues: Small ribosomal subunit protein bS18 (74 aa).

This sequence belongs to the bacterial ribosomal protein bS18 family. In terms of assembly, part of the 30S ribosomal subunit. Forms a tight heterodimer with protein bS6.

Functionally, binds as a heterodimer with protein bS6 to the central domain of the 16S rRNA, where it helps stabilize the platform of the 30S subunit. The sequence is that of Small ribosomal subunit protein bS18 from Novosphingobium aromaticivorans (strain ATCC 700278 / DSM 12444 / CCUG 56034 / CIP 105152 / NBRC 16084 / F199).